Reading from the N-terminus, the 556-residue chain is Urocanate hydratase (556 aa).

NAD(+) contacts are provided by residues 53–54, Q131, 177–179, E197, 243–244, 264–268, 274–275, and Y323; these read GG, GMG, NA, QTSAH, and YL. Residue C411 is part of the active site. NAD(+) is bound at residue G493.

It belongs to the urocanase family. NAD(+) is required as a cofactor.

It localises to the cytoplasm. It catalyses the reaction 4-imidazolone-5-propanoate = trans-urocanate + H2O. The protein operates within amino-acid degradation; L-histidine degradation into L-glutamate; N-formimidoyl-L-glutamate from L-histidine: step 2/3. Functionally, catalyzes the conversion of urocanate to 4-imidazolone-5-propionate. In Pseudomonas fluorescens (strain SBW25), this protein is Urocanate hydratase.